A 362-amino-acid chain; its full sequence is Spermidine/putrescine import ATP-binding protein PotA (362 aa).

One can recognise an ABC transporter domain in the interval 6–237 (ISFKHVVKSY…PINHYVADFI (232 aa)). Residue 39–46 (GPSGCGKT) coordinates ATP.

Belongs to the ABC transporter superfamily. Spermidine/putrescine importer (TC 3.A.1.11.1) family. As to quaternary structure, the complex is composed of two ATP-binding proteins (PotA), two transmembrane proteins (PotB and PotC) and a solute-binding protein (PotD).

Its subcellular location is the cell membrane. The catalysed reaction is ATP + H2O + polyamine-[polyamine-binding protein]Side 1 = ADP + phosphate + polyamineSide 2 + [polyamine-binding protein]Side 1.. Its function is as follows. Part of the ABC transporter complex PotABCD involved in spermidine/putrescine import. Responsible for energy coupling to the transport system. The chain is Spermidine/putrescine import ATP-binding protein PotA from Ligilactobacillus salivarius (strain UCC118) (Lactobacillus salivarius).